The chain runs to 424 residues: T-DNA border endonuclease VirD2 (424 aa).

Disordered stretches follow at residues 206–269 and 321–424; these read AQKI…GSSI and RPVT…RGGT. The segment covering 212–221 has biased composition (acidic residues); sequence EDTDFDETSP. A compositionally biased stretch (basic and acidic residues) spans 243 to 261; the sequence is EPDRATRHDKQPLEQHARF. Basic residues predominate over residues 330-339; that stretch reads TVKRQQRSKR. Composition is skewed to basic and acidic residues over residues 394–408 and 415–424; these read SPKR…ELGG and NRRDDGRGGT.

Functionally, tumor formation by A.tumefaciens involves the transfer and integration of a defined segment (T-DNA) of Ti plasmid DNA into the plant nuclear genome. The virD operon encodes a site-specific endonuclease that cleaves at a unique site within both 24 bp direct repeats flanking the T-DNA. This is T-DNA border endonuclease VirD2 (virD2) from Rhizobium radiobacter (Agrobacterium tumefaciens).